We begin with the raw amino-acid sequence, 389 residues long: viridiflorene synthase Agr2 (389 aa).

Positions 1 to 15 (MVWDFVLSLFHSLLA) are cleaved as a signal peptide. The Mg(2+) site is built by aspartate 128, asparagine 263, serine 267, and glutamate 271. The DDXXD motif motif lies at 128-132 (DEVTD). 2 residues coordinate (2E,6E)-farnesyl diphosphate: arginine 360 and tyrosine 361.

It belongs to the terpene synthase family. It depends on Mg(2+) as a cofactor.

It catalyses the reaction (2E,6E)-farnesyl diphosphate = viridiflorene + diphosphate. Terpene cyclase that catalyzes the cyclization of farnesyl diphosphate (FPP) to viridiflorene. The polypeptide is viridiflorene synthase Agr2 (Cyclocybe aegerita (Black poplar mushroom)).